Reading from the N-terminus, the 455-residue chain is Exodeoxyribonuclease 7 large subunit (455 aa).

It belongs to the XseA family. As to quaternary structure, heterooligomer composed of large and small subunits.

It is found in the cytoplasm. It carries out the reaction Exonucleolytic cleavage in either 5'- to 3'- or 3'- to 5'-direction to yield nucleoside 5'-phosphates.. In terms of biological role, bidirectionally degrades single-stranded DNA into large acid-insoluble oligonucleotides, which are then degraded further into small acid-soluble oligonucleotides. This chain is Exodeoxyribonuclease 7 large subunit, found in Koribacter versatilis (strain Ellin345).